The following is a 611-amino-acid chain: Rho GTPase-activating protein gacN (611 aa).

A Rho-GAP domain is found at 24 to 219 (KTFKKILKPG…VLIEEFHVLY (196 aa)). The stretch at 236–499 (IREDKRSTSE…TKLQKSSSSS (264 aa)) forms a coiled coil. Basic and acidic residues predominate over residues 476–491 (NQLEKEKSKLQDELTK). A disordered region spans residues 476–550 (NQLEKEKSKL…TTPPPPLDED (75 aa)). Low complexity-rich tracts occupy residues 495 to 509 (SSSS…SSSS) and 527 to 540 (TTTT…AQQP).

It localises to the cytoplasm. In terms of biological role, rho GTPase-activating protein involved in the signal transduction pathway. The polypeptide is Rho GTPase-activating protein gacN (gacN) (Dictyostelium discoideum (Social amoeba)).